A 1762-amino-acid polypeptide reads, in one-letter code: MEFVYFSNEFPKDDLHDIYRGLHNHSKHRDFPLLARFLNEATAAVKDEVRRLPTELKRLIPPFDNLLSWVENKELREGLLCGAIDGVLLIVAQVASYIGYVESHPEELRNMSEASLAGLGIGLLASTAISLSTEQADLPLAGADAVRLAFRMGVHVFGVSENLEARDLSEKPETWACVVHNVDPAVAQKELDAMQPAGEVPETGKVFISAISRTSVTVSAPPQKLKALLNKCEFFRKARYIELPVYGGLCHAPHIYSAQDTESIVRGASLNARRKGLEPVVPVYSTSSGQPYAAKTATELFECVVSELLRQAICWDKVIAGIVDSAKRTATTEATLHCFGNSIPLNDLDKAFKSDMPELRVSTNNLVPWIFQNEPRDTAPRGPAQSKLAITGISCRFPGGATTTEKFWEILEKGLDVSRKIPADRFDIETHYDPTGKALNKSMTQYMCPIDEPGLFDAPFFNMSPREAQVVDPQMRLALVTAYEALERAGYVGNRTASTKLERIGTYYGQAADDYREVNQGQEVSTYYIPGGCRAFGPGRINYFFKFAGPSYSIDTACSSGLAAIEIACRALWNGDVDTAVTGGMNILTNPDGFAGLNQGHFLSKGHNACKTWDATADGYCRADGIGSLVIKRLEDAEADNDNILGVILGAGTNHSAEAVSITHPHAGHQAYLSRQVLRQAGVDPLDVSYVELHGTGTQAGDFEEMSGIMDVYAPLTKRRSKDQPLHIGAVKSNVGHGESVAGTTALIKVLMMLQKNAIPKHIGIKTEINPKFPKDFKQRNLHIAFEQTAWPQIPGKKRLAAINNFGAAGGNTTMVLEEGPVREKQQADPRQSHVVAVSAKTKASLTGNIERLIAYLEANPATDLADLAYTSTARRYQHTHRVAMATSDVAELTKKLTSSLSKVDSIGPVGKSGPPQVAFSFTGQGASHKSMNLELYRDVPTFREHIHHLDTIAQNQGFPSCIPALDGSFPQDHEHSPVITQLALVCTEMALAKYWASLGVKPDVVIGHSLGEYAAMHVAGVITASDAIFMVGRRAQMLQEKCKIRSHTMMAVRASVAQISESSGGKRHTIACVNGPSDTVLSGTKEQMNEIQVPLEAAGYRCIKLDVAFAFHSEQTDPILDDLEAVLESGVVFQEPKMPYISPLLGKTIFDGKTLNANYVRRATREAVNFLPAMQNAIDIEAVSEETVWVEIGPHPVCAGFIKSIVPSTQLAIPSIRRNEDNWTTMSSSMAALHLTGVALSWNEFHRPFESSLRLLDLPTYAFTEKNYWLQYNGDWCLTKGNTFYSAEKEAARAAEPQPSVGSDLQTSTVQQVIALEVEGNAGVVVMKSDLMQGDLLVAAHGHRMNGCGVVTSSIHADIAYTLGNYLYRKIKPKDKVPAMNMTDLLVTKGLVAQNKTKYPQEFRVTAATPDITSGQIMMSWQNVDDNEPFATATLILGDANDWLSSWESMSHLICSRIDSLERMAAEGKASRFTRNMAYTLFASNLVDYADKYRGMQSVVMSGLEAFADVELTTKESGTWTIAPYFIDSVAHLAGFVMNCSDAMDAAKNYCVTPGWKSMRFAKPLTAGAKYRSYVRMIPTKDDPTVYLGDVYIMQDDEIMGMVGGIQFRSYPRILLNRFFSAPDKAMTEARAGNAATVTPQVTIPKPPSSLKTPAPANPSRRDSGVESKPLPPPQPKQAPPSTDSENSTISKALTLIATEGGLEISDLGDDVSFADLGIDSLLSLVISEKFRSELGVQVSGSLVLDYPRIGDMRRWLEEHY.

Residues 17-247 (DIYRGLHNHS…ARYIELPVYG (231 aa)) are N-terminal acylcarrier protein transacylase domain (SAT). The Ketosynthase family 3 (KS3) domain maps to 385-819 (QSKLAITGIS…GGNTTMVLEE (435 aa)). Active-site for beta-ketoacyl synthase activity residues include Cys558, His694, and His737. The interval 920 to 1240 (FSFTGQGASH…MAALHLTGVA (321 aa)) is malonyl-CoA:ACP transacylase (MAT) domain. The tract at residues 1308–1622 (TSTVQQVIAL…PRILLNRFFS (315 aa)) is product template (PT) domain. Positions 1312–1448 (QQVIALEVEG…GDANDWLSSW (137 aa)) are N-terminal hotdog fold. Positions 1312–1618 (QQVIALEVEG…FRSYPRILLN (307 aa)) constitute a PKS/mFAS DH domain. His1344 acts as the Proton acceptor; for dehydratase activity in catalysis. Residues 1471–1618 (ASRFTRNMAY…FRSYPRILLN (148 aa)) are C-terminal hotdog fold. Catalysis depends on Asp1529, which acts as the Proton donor; for dehydratase activity. The disordered stretch occupies residues 1632–1689 (RAGNAATVTPQVTIPKPPSSLKTPAPANPSRRDSGVESKPLPPPQPKQAPPSTDSENS). The segment covering 1671–1680 (PLPPPQPKQA) has biased composition (pro residues). The Carrier domain maps to 1685–1762 (DSENSTISKA…DMRRWLEEHY (78 aa)). At Ser1722 the chain carries O-(pantetheine 4'-phosphoryl)serine.

The catalysed reaction is holo-[ACP] + 8 malonyl-CoA + 8 H(+) = atrochrysone carboxyl-[ACP] + 8 CO2 + 8 CoA + 2 H2O. It functions in the pathway secondary metabolite biosynthesis. Non-reducing polyketide synthase; part of the gene cluster that mediates the biosynthesis of an emodin derivative that may be involved in black Sigatoka disease of banana. The pathway begins with the synthesis of atrochrysone thioester by the polyketide synthase PKS8-1. The atrochrysone carboxyl ACP thioesterase MYCFIDRAFT_190111 then breaks the thioester bond and releases the atrochrysone carboxylic acid from PKS8-1. The decarboxylase MYCFIDRAFT_34057 then catalyzes the concerted decarboxylation-elimination required to convert atochrysone carboxylic acid into emodin anthrone, which is further oxidized to emodin by the anthrone oxygenase MYCFIDRAFT_34418. The functions of the other tailoring enzymes as well as the final product of the cluster have still to be identified. The sequence is that of Non-reducing polyketide synthase PKS8-1 (PKS8-1) from Pseudocercospora fijiensis (strain CIRAD86) (Black leaf streak disease fungus).